We begin with the raw amino-acid sequence, 582 residues long: Potassium-transporting ATPase potassium-binding subunit (582 aa).

Helical transmembrane passes span 11 to 31 (AVFF…LAWV), 81 to 101 (LKAV…VLMF), 148 to 168 (FGIG…MPAF), 195 to 215 (LLPI…VQTI), 272 to 292 (VLTL…GAWV), 298 to 318 (GVAI…VAVV), 379 to 399 (ALGA…NGVG), 401 to 421 (GLLN…LMIG), 439 to 459 (VFVV…AAVV), and 551 to 571 (GLLI…ALVF).

The protein belongs to the KdpA family. The system is composed of three essential subunits: KdpA, KdpB and KdpC.

Its subcellular location is the cell membrane. Its function is as follows. Part of the high-affinity ATP-driven potassium transport (or Kdp) system, which catalyzes the hydrolysis of ATP coupled with the electrogenic transport of potassium into the cytoplasm. This subunit binds the extracellular potassium ions and delivers the ions to the membrane domain of KdpB through an intramembrane tunnel. In Halobacterium salinarum (strain ATCC 700922 / JCM 11081 / NRC-1) (Halobacterium halobium), this protein is Potassium-transporting ATPase potassium-binding subunit.